The chain runs to 445 residues: Lateral flagellar hook-associated protein 2 (445 aa).

A coiled-coil region spans residues 388 to 423 (SGAFKSRKEALQANLDRLSDKQTTLERKYDMSYKRY).

This sequence belongs to the FliD family. Homopentamer.

Its subcellular location is the secreted. It localises to the bacterial flagellum. Required for the morphogenesis and for the elongation of the flagellar filament by facilitating polymerization of the flagellin monomers at the tip of growing filament. Forms a capping structure, which prevents flagellin subunits (transported through the central channel of the flagellum) from leaking out without polymerization at the distal end. Essential for swarming motility. The protein is Lateral flagellar hook-associated protein 2 (fliDL) of Vibrio parahaemolyticus serotype O3:K6 (strain RIMD 2210633).